Here is a 619-residue protein sequence, read N- to C-terminus: Dihydroxy-acid dehydratase (619 aa).

Asp-81 contacts Mg(2+). A [2Fe-2S] cluster-binding site is contributed by Cys-122. 2 residues coordinate Mg(2+): Asp-123 and Lys-124. Position 124 is an N6-carboxylysine (Lys-124). Cys-195 serves as a coordination point for [2Fe-2S] cluster. Glu-494 contacts Mg(2+). Ser-520 (proton acceptor) is an active-site residue.

This sequence belongs to the IlvD/Edd family. In terms of assembly, homodimer. Requires [2Fe-2S] cluster as cofactor. It depends on Mg(2+) as a cofactor.

The enzyme catalyses (2R)-2,3-dihydroxy-3-methylbutanoate = 3-methyl-2-oxobutanoate + H2O. The catalysed reaction is (2R,3R)-2,3-dihydroxy-3-methylpentanoate = (S)-3-methyl-2-oxopentanoate + H2O. It functions in the pathway amino-acid biosynthesis; L-isoleucine biosynthesis; L-isoleucine from 2-oxobutanoate: step 3/4. Its pathway is amino-acid biosynthesis; L-valine biosynthesis; L-valine from pyruvate: step 3/4. In terms of biological role, functions in the biosynthesis of branched-chain amino acids. Catalyzes the dehydration of (2R,3R)-2,3-dihydroxy-3-methylpentanoate (2,3-dihydroxy-3-methylvalerate) into 2-oxo-3-methylpentanoate (2-oxo-3-methylvalerate) and of (2R)-2,3-dihydroxy-3-methylbutanoate (2,3-dihydroxyisovalerate) into 2-oxo-3-methylbutanoate (2-oxoisovalerate), the penultimate precursor to L-isoleucine and L-valine, respectively. The protein is Dihydroxy-acid dehydratase of Shewanella sp. (strain ANA-3).